A 215-amino-acid polypeptide reads, in one-letter code: Thymidylate kinase (215 aa).

Residue 7–14 (GLDGSGKT) coordinates ATP.

This sequence belongs to the thymidylate kinase family.

The catalysed reaction is dTMP + ATP = dTDP + ADP. In terms of biological role, phosphorylation of dTMP to form dTDP in both de novo and salvage pathways of dTTP synthesis. This Mycoplasmopsis agalactiae (strain NCTC 10123 / CIP 59.7 / PG2) (Mycoplasma agalactiae) protein is Thymidylate kinase.